We begin with the raw amino-acid sequence, 963 residues long: Non-ribosomal peptide synthetase CmlP (963 aa).

The Carrier domain maps to 492–568 (GEDAAELRRV…AAFLRHLRGE (77 aa)). Serine 526 bears the O-(pantetheine 4'-phosphoryl)serine mark. The tract at residues 928–963 (GRLLGTPPDTPAGDRPERTGTTAEAQNGAAHAPTPR) is disordered.

Belongs to the ATP-dependent AMP-binding enzyme family. The cofactor is pantetheine 4'-phosphate.

The enzyme catalyses 4-amino-L-phenylalanine + holo-[peptidyl-carrier protein] + ATP = 4-amino-L-phenylalanyl-[peptidyl-carrier protein] + AMP + diphosphate. It functions in the pathway antibiotic biosynthesis. Involved in chloramphenicol biosynthesis. Activates 4-amino-L-phenylalanine by adenylation and loads it onto its peptidyl carrier domain, via a thioester linkage to the phosphopanthetheine moiety. Can also adenylate tyrosine and phenylalanine at low rates, but not L-p-nitrophenylalanine or threo-phenylserine. This Streptomyces venezuelae (strain ATCC 10712 / CBS 650.69 / DSM 40230 / JCM 4526 / NBRC 13096 / PD 04745) protein is Non-ribosomal peptide synthetase CmlP.